The sequence spans 177 residues: Large ribosomal subunit protein uL6 (177 aa).

The interval 155-177 (EPYKGKGVKHADERIFRKEGKKK) is disordered.

Belongs to the universal ribosomal protein uL6 family. In terms of assembly, part of the 50S ribosomal subunit.

This protein binds to the 23S rRNA, and is important in its secondary structure. It is located near the subunit interface in the base of the L7/L12 stalk, and near the tRNA binding site of the peptidyltransferase center. The polypeptide is Large ribosomal subunit protein uL6 (Bartonella tribocorum (strain CIP 105476 / IBS 506)).